Consider the following 237-residue polypeptide: Peroxisomal membrane protein 11-1 (237 aa).

The Cytoplasmic portion of the chain corresponds to Met1 to Asn92. A helical membrane pass occupies residues Ala93–Tyr113. Residues Lys114 to Lys204 are Lumenal-facing. The chain crosses the membrane as a helical span at residues Ile205 to Tyr223. Topologically, residues Gln224–Ala237 are cytoplasmic.

Belongs to the peroxin-11 family. As to expression, expressed in seedlings, leaf sheaths, flag leaf, panicles and spikelets.

It localises to the peroxisome membrane. In terms of biological role, involved in peroxisomal proliferation. This Oryza sativa subsp. japonica (Rice) protein is Peroxisomal membrane protein 11-1 (PEX11-1).